The chain runs to 644 residues: Protein DA1-related 6 (644 aa).

3 consecutive UIM domains span residues 119–138 (EEDELLARTLEESLKENNRR), 181–200 (DVDEQFAKAVKESLKNKGKG), and 244–263 (DEDEQLAKAVEESLKGKGQI). One can recognise an LIM zinc-binding domain in the interval 284-355 (SLCGGCNFAV…YVCKEKKMKT (72 aa)). The span at 572–589 (ASSSASSSSRTPPAASAS) shows a compositional bias: low complexity. The tract at residues 572–591 (ASSSASSSSRTPPAASASKK) is disordered.

In terms of assembly, interacts with ubiquitin.

Its function is as follows. Ubiquitin receptor that probably regulates developmental process. The chain is Protein DA1-related 6 (DAR6) from Arabidopsis thaliana (Mouse-ear cress).